The primary structure comprises 339 residues: Fructose-1,6-bisphosphatase class 1 (339 aa).

Residues Glu-91, Asp-113, Leu-115, and Asp-116 each contribute to the Mg(2+) site. Residues 116-119 (DGSS), Asn-210, and Lys-276 contribute to the substrate site. Mg(2+) is bound at residue Glu-282.

Belongs to the FBPase class 1 family. In terms of assembly, homotetramer. Requires Mg(2+) as cofactor.

Its subcellular location is the cytoplasm. It catalyses the reaction beta-D-fructose 1,6-bisphosphate + H2O = beta-D-fructose 6-phosphate + phosphate. It participates in carbohydrate biosynthesis; gluconeogenesis. The protein is Fructose-1,6-bisphosphatase class 1 of Bordetella bronchiseptica (strain ATCC BAA-588 / NCTC 13252 / RB50) (Alcaligenes bronchisepticus).